Consider the following 192-residue polypeptide: Adenylate kinase (192 aa).

10-18 (GVPGVGGTT) lines the ATP pocket.

The protein belongs to the archaeal adenylate kinase family. In terms of assembly, monomer.

The protein localises to the cytoplasm. It carries out the reaction AMP + ATP = 2 ADP. This Methanococcus maripaludis (strain C7 / ATCC BAA-1331) protein is Adenylate kinase.